A 179-amino-acid polypeptide reads, in one-letter code: Adenine phosphoribosyltransferase (179 aa).

Belongs to the purine/pyrimidine phosphoribosyltransferase family. Homodimer.

The protein localises to the cytoplasm. The catalysed reaction is AMP + diphosphate = 5-phospho-alpha-D-ribose 1-diphosphate + adenine. It functions in the pathway purine metabolism; AMP biosynthesis via salvage pathway; AMP from adenine: step 1/1. Functionally, catalyzes a salvage reaction resulting in the formation of AMP, that is energically less costly than de novo synthesis. In Actinobacillus pleuropneumoniae serotype 5b (strain L20), this protein is Adenine phosphoribosyltransferase.